We begin with the raw amino-acid sequence, 273 residues long: Shikimate dehydrogenase (NADP(+)) (273 aa).

Shikimate-binding positions include 14-16 (SKS) and Thr-61. Lys-65 (proton acceptor) is an active-site residue. Asp-77 provides a ligand contact to NADP(+). Positions 86 and 102 each coordinate shikimate. Residues 126-130 (GAGGA), 150-155 (NRTYEK), and Met-213 each bind NADP(+). Shikimate is bound at residue Tyr-215. Gly-237 is an NADP(+) binding site.

The protein belongs to the shikimate dehydrogenase family. In terms of assembly, homodimer.

It carries out the reaction shikimate + NADP(+) = 3-dehydroshikimate + NADPH + H(+). It participates in metabolic intermediate biosynthesis; chorismate biosynthesis; chorismate from D-erythrose 4-phosphate and phosphoenolpyruvate: step 4/7. Its function is as follows. Involved in the biosynthesis of the chorismate, which leads to the biosynthesis of aromatic amino acids. Catalyzes the reversible NADPH linked reduction of 3-dehydroshikimate (DHSA) to yield shikimate (SA). In Aliivibrio salmonicida (strain LFI1238) (Vibrio salmonicida (strain LFI1238)), this protein is Shikimate dehydrogenase (NADP(+)).